The sequence spans 142 residues: Thioredoxin-like protein YLS8 (142 aa).

Belongs to the DIM1 family. Expressed in roots, leaves, stems, cauline leaves and flowers.

This is Thioredoxin-like protein YLS8 (YLS8) from Arabidopsis thaliana (Mouse-ear cress).